Reading from the N-terminus, the 307-residue chain is Probable aspartoacylase (307 aa).

Zn(2+) contacts are provided by H13 and E16. Residues R55 and 62-63 (NR) contribute to the substrate site. H105 contributes to the Zn(2+) binding site. E163 and Y276 together coordinate substrate.

This sequence belongs to the AspA/AstE family. Aspartoacylase subfamily. The cofactor is Zn(2+).

The catalysed reaction is an N-acyl-L-aspartate + H2O = a carboxylate + L-aspartate. The sequence is that of Probable aspartoacylase from Prochlorococcus marinus (strain SARG / CCMP1375 / SS120).